We begin with the raw amino-acid sequence, 271 residues long: Formamidopyrimidine-DNA glycosylase (271 aa).

Pro2 functions as the Schiff-base intermediate with DNA in the catalytic mechanism. Residue Glu3 is the Proton donor of the active site. Lys57 acts as the Proton donor; for beta-elimination activity in catalysis. DNA contacts are provided by His90, Arg109, and Lys151. Residues 236-270 (HVYGRGGETCTQCGNLLSEIRLGQRTTVFCGICQT) form an FPG-type zinc finger. The active-site Proton donor; for delta-elimination activity is Arg260.

This sequence belongs to the FPG family. As to quaternary structure, monomer. The cofactor is Zn(2+).

The enzyme catalyses Hydrolysis of DNA containing ring-opened 7-methylguanine residues, releasing 2,6-diamino-4-hydroxy-5-(N-methyl)formamidopyrimidine.. It carries out the reaction 2'-deoxyribonucleotide-(2'-deoxyribose 5'-phosphate)-2'-deoxyribonucleotide-DNA = a 3'-end 2'-deoxyribonucleotide-(2,3-dehydro-2,3-deoxyribose 5'-phosphate)-DNA + a 5'-end 5'-phospho-2'-deoxyribonucleoside-DNA + H(+). Involved in base excision repair of DNA damaged by oxidation or by mutagenic agents. Acts as a DNA glycosylase that recognizes and removes damaged bases. Has a preference for oxidized purines, such as 7,8-dihydro-8-oxoguanine (8-oxoG). Has AP (apurinic/apyrimidinic) lyase activity and introduces nicks in the DNA strand. Cleaves the DNA backbone by beta-delta elimination to generate a single-strand break at the site of the removed base with both 3'- and 5'-phosphates. This chain is Formamidopyrimidine-DNA glycosylase, found in Shewanella sp. (strain MR-4).